The following is a 101-amino-acid chain: uncharacterized protein (101 aa).

This is an uncharacterized protein from Schizosaccharomyces pombe (strain 972 / ATCC 24843) (Fission yeast).